Here is a 268-residue protein sequence, read N- to C-terminus: Microtubule-associated protein RP/EB family member 1 (268 aa).

Alanine 2 is subject to N-acetylalanine. A Calponin-homology (CH) domain is found at 14 to 116; sequence NLSRHDMLAW…FVQWFKKFFD (103 aa). Lysine 66 is subject to N6-crotonyllysine. Tyrosine 124 carries the phosphotyrosine modification. The interaction with MTUS2/TIP150 stretch occupies residues 124-268; sequence YDPVAARQGQ…GGPQEEQEEY (145 aa). The segment at 146–180 is disordered; sequence LSKPKKPLGSSTAAPQRPIATQRTTAAPKAGPGMV. Positions 154 to 170 are enriched in polar residues; that stretch reads GSSTAAPQRPIATQRTT. Serine 155 bears the Phosphoserine mark. The region spanning 185–255 is the EB1 C-terminal domain; that stretch reads GVGNGDDEAA…LYATDEGFVI (71 aa). An interaction with APC region spans residues 206-211; the sequence is TVEDLE. A DCTN1-binding region spans residues 208–268; it reads EDLEKERDFY…GGPQEEQEEY (61 aa). Lysine 220 carries the N6-acetyllysine modification. Residues 220 to 242 form an APC-binding region; it reads KLRNIELICQENEGENDPVLQRI. An interaction with SKA1 region spans residues 232–255; it reads EGENDPVLQRIVDILYATDEGFVI.

It belongs to the MAPRE family. In terms of assembly, homodimer. Heterodimer with MAPRE3. Interacts (via C-terminal residues 206-211) with APC (via C-terminal residues 2674-2845); the interaction inhibits association with and bundling of F-actin. Interacts with DCTN1, DIAPH1 and DIAPH2. Interacts with DCTN2, TERF1 and dynein intermediate chain. Interacts with CLASP2, DST, KIF2C and STIM1; probably required for their targeting to the growing microtubule plus ends. Interacts with MTUS2; interaction is direct and probably targets MTUS2 to microtubules. Interacts (via C-terminus) with SKA1 (via SXIP motif); the interaction is direct and stabilizes the kinetochore-microtubule attachment of the SKA1 complex. Interacts with APC2. Interacts with CLASP1. Interacts (via C-terminus) with CLIP1. Interacts with SLAIN2 and SLAIN1. Interacts with MACF1. Interacts with KIF18B; this interaction is required for efficient accumulation of KIF18B at microtubule plus ends. Interacts with MISP. Interacts with RABL2/RABL2A; binds preferentially to GTP-bound RABL2. Interacts with KCNAB2. Interacts with KNSTRN. Interacts with NCKAP5L. Interacts with AKAP9. Interacts with PDE4DIP isoform 2/MMG8/SMYLE; this interaction is required for its recruitment to the Golgi apparatus. May form a pericentrosomal complex with AKAP9, CDK5RAP2 and PDE4DIP isoform 2/MMG8/SMYLE; within this complex, MAPRE1 binding to CDK5RAP2 may be mediated by PDE4DIP. Contrary to other mammalian species, does not interact with CDK5RAP2, possibly due to the lack of conservation of the MAPRE1-binding motif in mouse CDK5RAP2. Interacts with AKNA. Interacts with GAS2L1, GAS2L2, and GAS2L3. Interacts with RARRES1 and AGBL2. In terms of processing, acetylation at Lys-220 by KAT2B/PCAF promotes dynamic kinetochore-microtubule interactions in early mitosis. Post-translationally, crotonylated by KAT5 during mitosis, promoting astral microtubule plasticity and dynamic connection between astral microtubules and the cortex during mitotic chromosome segregation, thereby ensuring accurate spindle positioning in mitosis. Decrotonylated by HDAC3. In terms of tissue distribution, expressed within the midpiece of sperm tail (at protein level).

The protein resides in the cytoplasm. It is found in the cytoskeleton. It localises to the microtubule organizing center. The protein localises to the centrosome. Its subcellular location is the spindle. The protein resides in the spindle pole. In terms of biological role, plus-end tracking protein (+TIP) that binds to the plus-end of microtubules and regulates the dynamics of the microtubule cytoskeleton. Recruits other +TIP proteins to microtubules by binding to a conserved Ser-X-Leu-Pro (SXLP) motif in their polypeptide chains. Promotes cytoplasmic microtubule nucleation and elongation. Involved in mitotic spindle positioning by stabilizing microtubules and promoting dynamic connection between astral microtubules and the cortex during mitotic chromosome segregation. Assists chromosome alignment in metaphase by recruiting the SKA complex to the spindle and stabilizing its interactions with microtubule bundles (K-fibers). Also acts as a regulator of minus-end microtubule organization: interacts with the complex formed by AKAP9 and PDE4DIP, leading to recruit CAMSAP2 to the Golgi apparatus, thereby tethering non-centrosomal minus-end microtubules to the Golgi, an important step for polarized cell movement. Promotes elongation of CAMSAP2-decorated microtubule stretches on the minus-end of microtubules. Acts as a regulator of autophagosome transport via interaction with CAMSAP2. Functions downstream of Rho GTPases and DIAPH1 in stable microtubule formation. May play a role in cell migration. This Mus musculus (Mouse) protein is Microtubule-associated protein RP/EB family member 1 (Mapre1).